Reading from the N-terminus, the 577-residue chain is Galectin-3-binding protein (577 aa).

The N-terminal stretch at 1-18 (MALLWLLSVFLLVPGTQG) is a signal peptide. The region spanning 24–124 (MRLVNGASAN…HEKDAGVVCS (101 aa)) is the SRCR domain. 3 cysteine pairs are disulfide-bonded: Cys49-Cys113, Cys62-Cys123, and Cys93-Cys103. N-linked (GlcNAc...) asparagine glycosylation is present at Asn69. An N-linked (GlcNAc...) asparagine glycan is attached at Asn125. The BTB domain occupies 153–221 (CDLFIQVTGQ…FYSRRIEVSM (69 aa)). Residues 260-360 (PLDLYAYARA…MLPQELFELQ (101 aa)) enclose the BACK domain. 4 N-linked (GlcNAc...) asparagine glycosylation sites follow: Asn362, Asn398, Asn543, and Asn572.

Homodimers and homomultimers. The multimers form ring-like structures with a diameter of 30-40 nm. Binds LGALS1 and LGALS3. Binds ITGB1, COL4A1, COL5A1, COL6A1, FN1 and NID. Interacts with PPIC (in vitro). The unglycosylated form interacts with PDE4DIP isoform 2/MMG8/SMYLE; this interaction may connect a pericentrosomal complex to the gamma-tubulin ring complex (gamma-TuRC) to promote microtubule assembly and acetylation. In terms of processing, N-glycosylated. Detected in embryo, liver, spleen, kidney, lung, heart, intestine, thymus and lymph node.

It localises to the secreted. Its subcellular location is the extracellular space. The protein resides in the extracellular matrix. Functionally, promotes integrin-mediated cell adhesion. May stimulate host defense against viruses and tumor cells. The chain is Galectin-3-binding protein (Lgals3bp) from Mus musculus (Mouse).